The chain runs to 426 residues: Serine hydroxymethyltransferase (426 aa).

Residues Leu115 and Gly119–Ile121 each bind (6S)-5,6,7,8-tetrahydrofolate. Lys225 is subject to N6-(pyridoxal phosphate)lysine.

This sequence belongs to the SHMT family. As to quaternary structure, homodimer. The cofactor is pyridoxal 5'-phosphate.

Its subcellular location is the cytoplasm. It participates in amino-acid biosynthesis; glycine biosynthesis; glycine from L-serine: step 1/1. Functionally, catalyzes the reversible interconversion of serine and glycine with a modified folate serving as the one-carbon carrier. Also exhibits a pteridine-independent aldolase activity toward beta-hydroxyamino acids, producing glycine and aldehydes, via a retro-aldol mechanism. This Thermoplasma acidophilum (strain ATCC 25905 / DSM 1728 / JCM 9062 / NBRC 15155 / AMRC-C165) protein is Serine hydroxymethyltransferase.